The sequence spans 165 residues: Endoribonuclease YbeY (165 aa).

Histidine 130, histidine 134, and histidine 140 together coordinate Zn(2+).

The protein belongs to the endoribonuclease YbeY family. Requires Zn(2+) as cofactor.

The protein resides in the cytoplasm. In terms of biological role, single strand-specific metallo-endoribonuclease involved in late-stage 70S ribosome quality control and in maturation of the 3' terminus of the 16S rRNA. This is Endoribonuclease YbeY from Streptococcus pneumoniae serotype 4 (strain ATCC BAA-334 / TIGR4).